The chain runs to 131 residues: UPF0292 protein PF1724 (131 aa).

In terms of domain architecture, Toprim spans 20-103 (KGVIIVEGKR…ETRRELQFIA (84 aa)). 3 residues coordinate Mg(2+): Glu26, Asp69, and Asp71.

The protein belongs to the UPF0292 family. Requires Mg(2+) as cofactor.

The protein is UPF0292 protein PF1724 of Pyrococcus furiosus (strain ATCC 43587 / DSM 3638 / JCM 8422 / Vc1).